We begin with the raw amino-acid sequence, 412 residues long: Fringe glycosyltransferase (412 aa).

Residues 1 to 15 lie on the Cytoplasmic side of the membrane; it reads MMSLTVLSPPQRFKR. A helical; Signal-anchor for type II membrane protein transmembrane segment spans residues 16 to 34; sequence ILQAMMLAVAVVYMTLLLY. Residues 35–412 lie on the Lumenal side of the membrane; the sequence is QSAYGYPGIQ…FPYFSFCPPR (378 aa). Arginine 164 contributes to the substrate binding site. Cystine bridges form between cysteine 204/cysteine 215 and cysteine 233/cysteine 297. Aspartate 237 is a binding site for substrate. A Mn(2+)-binding site is contributed by aspartate 238. Residue aspartate 327 is part of the active site. Position 351 (histidine 351) interacts with Mn(2+). An intrachain disulfide couples cysteine 400 to cysteine 409.

Belongs to the glycosyltransferase 31 family. Requires Mn(2+) as cofactor. As to expression, expressed in dorsal cells.

Its subcellular location is the golgi apparatus membrane. The enzyme catalyses 3-O-(alpha-L-fucosyl)-L-threonyl-[EGF-like domain protein] + UDP-N-acetyl-alpha-D-glucosamine = 3-O-(N-acetyl-beta-D-glucosaminyl-(1-&gt;3)-alpha-L-fucosyl)-L-threonyl-[EGF-like domain protein] + UDP + H(+). It catalyses the reaction 3-O-(alpha-L-fucosyl)-L-seryl-[EGF-like domain protein] + UDP-N-acetyl-alpha-D-glucosamine = 3-O-(N-acetyl-beta-D-glucosaminyl-(1-&gt;3)-alpha-L-fucosyl)-L-seryl-[EGF-like domain protein] + UDP + H(+). Its function is as follows. Glycosyltransferase involved in the elongation of O-linked ligands to activate Notch signaling. Possesses fucose-specific beta-1,3-N-acetylglucosaminyltransferase activity; extends the O-linked fucose on the Notch EGF repeats. Boundary-specific cell-signaling molecule that is responsible for dorsal-ventral cell interactions during wing development. The chain is Fringe glycosyltransferase (fng) from Drosophila melanogaster (Fruit fly).